We begin with the raw amino-acid sequence, 213 residues long: Protein GET1 (213 aa).

Residues 1 to 4 lie on the Lumenal side of the membrane; it reads MPSL. A helical transmembrane segment spans residues 5 to 24; sequence LLVVFILQFLLHIINTVGAS. Topologically, residues 25 to 110 are cytoplasmic; sequence TVNDLLWILY…AFTSAVSTLR (86 aa). Residues 41–68 adopt a coiled-coil conformation; sequence TSSSAQKAQKLKKEIVQLKRELGATSAQ. The chain crosses the membrane as a helical span at residues 111–131; sequence WLGTQGLRFVLQFWFAKSPMF. The Lumenal portion of the chain corresponds to 132-155; that stretch reads WMPAGWLPFYVEWILSFPRAPLGS. A helical membrane pass occupies residues 156–172; sequence VSINVWGIACASMIALA. Residues 173-213 lie on the Cytoplasmic side of the membrane; it reads AEGLAAVWVLATKRPTPIATEKKEAMAFAADQKSSGEKKEL.

Belongs to the WRB/GET1 family. As to quaternary structure, interacts with GET3.

It is found in the endoplasmic reticulum membrane. Its function is as follows. Required for the post-translational delivery of tail-anchored (TA) proteins to the endoplasmic reticulum. Acts as a membrane receptor for soluble GET3, which recognizes and selectively binds the transmembrane domain of TA proteins in the cytosol. This chain is Protein GET1, found in Phaeosphaeria nodorum (strain SN15 / ATCC MYA-4574 / FGSC 10173) (Glume blotch fungus).